A 371-amino-acid chain; its full sequence is 2-oxoadipate dioxygenase/decarboxylase, chloroplastic (371 aa).

The N-terminal 50 residues, 1–50 (MISLHSSAIKASLYGSFPSSLRSTLSVSFSAGSLIRLPSVGKRNLSVVVS), are a transit peptide targeting the chloroplast. Residues His-113 and Arg-117 each contribute to the 2-oxoadipate site. His-113 contributes to the Fe(2+) binding site. His-250 contributes to the Fe(2+) binding site. The 2-oxoadipate site is built by Gln-296 and Tyr-320. Residue Glu-322 participates in Fe(2+) binding.

Belongs to the 2-oxoadipate dioxygenase/decarboxylase family. The cofactor is Fe(2+).

Its subcellular location is the plastid. It is found in the chloroplast. The enzyme catalyses 2-oxoadipate + O2 = (R)-2-hydroxyglutarate + CO2. It participates in amino-acid degradation. In terms of biological role, catalyzes the decarboxylation and hydroxylation of 2-oxoadipate (2OA) to form D-2-hydroxyglutarate (D-2-HGA). Is involved in a D-lysine catabolic pathway. The sequence is that of 2-oxoadipate dioxygenase/decarboxylase, chloroplastic from Arabidopsis thaliana (Mouse-ear cress).